Reading from the N-terminus, the 41-residue chain is Photosystem II reaction center protein L (41 aa).

The helical transmembrane segment at 20 to 40 (SLYLGLLLVFVVGILFSSYFF) threads the bilayer.

It belongs to the PsbL family. In terms of assembly, PSII is composed of 1 copy each of membrane proteins PsbA, PsbB, PsbC, PsbD, PsbE, PsbF, PsbH, PsbI, PsbJ, PsbK, PsbL, PsbM, PsbT, PsbX, PsbY, PsbZ, Psb30/Ycf12, peripheral proteins PsbO, CyanoQ (PsbQ), PsbU, PsbV and a large number of cofactors. It forms dimeric complexes.

The protein resides in the cellular thylakoid membrane. In terms of biological role, one of the components of the core complex of photosystem II (PSII). PSII is a light-driven water:plastoquinone oxidoreductase that uses light energy to abstract electrons from H(2)O, generating O(2) and a proton gradient subsequently used for ATP formation. It consists of a core antenna complex that captures photons, and an electron transfer chain that converts photonic excitation into a charge separation. This subunit is found at the monomer-monomer interface and is required for correct PSII assembly and/or dimerization. The chain is Photosystem II reaction center protein L from Trichodesmium erythraeum (strain IMS101).